A 92-amino-acid polypeptide reads, in one-letter code: Small ribosomal subunit protein uS19 (92 aa).

This sequence belongs to the universal ribosomal protein uS19 family.

In terms of biological role, protein S19 forms a complex with S13 that binds strongly to the 16S ribosomal RNA. This chain is Small ribosomal subunit protein uS19, found in Lysinibacillus sphaericus (strain C3-41).